Here is a 296-residue protein sequence, read N- to C-terminus: Probable porphobilinogen deaminase (296 aa).

S-(dipyrrolylmethanemethyl)cysteine is present on cysteine 241.

It belongs to the HMBS family. It depends on dipyrromethane as a cofactor.

It catalyses the reaction 4 porphobilinogen + H2O = hydroxymethylbilane + 4 NH4(+). Its pathway is porphyrin-containing compound metabolism; protoporphyrin-IX biosynthesis; coproporphyrinogen-III from 5-aminolevulinate: step 2/4. In terms of biological role, tetrapolymerization of the monopyrrole PBG into the hydroxymethylbilane pre-uroporphyrinogen in several discrete steps. This is Probable porphobilinogen deaminase from Pyrobaculum calidifontis (strain DSM 21063 / JCM 11548 / VA1).